Consider the following 362-residue polypeptide: Glucuronokinase 1 (362 aa).

126-136 (PRQTGLSGSSA) is an ATP binding site. The Proton acceptor role is filled by aspartate 179.

Belongs to the GHMP kinase family. It depends on Mg(2+) as a cofactor. The cofactor is Mn(2+). Requires Co(2+) as cofactor. In terms of tissue distribution, highly expressed in pollen. Detected in seedlings, inflorescences, seeds, leaves and roots.

The enzyme catalyses D-glucuronate + ATP = 1-phospho-alpha-D-glucuronate + ADP + H(+). In terms of biological role, sugar-1-kinase with a strict substrate specificity for D-glucuronic acid and ATP. Involved in the biosynthesis of UDP-glucuronic acid (UDP-GlcA), providing nucleotide sugars for cell-wall polymers. May be also involved in a salvage pathway for glucuronic acid. This Arabidopsis thaliana (Mouse-ear cress) protein is Glucuronokinase 1 (GLCAK1).